A 234-amino-acid polypeptide reads, in one-letter code: Phycobilisome rod-core linker polypeptide cpcG (234 aa).

Residues 11–191 (SSQNHRVNSF…PRYGSDFKER (181 aa)) enclose the PBS-linker domain.

This sequence belongs to the phycobilisome linker protein family. As to quaternary structure, the phycobilisome is a hemidiscoidal structure that is composed of two distinct substructures: a core complex and a number of rods radiating from the core.

Its subcellular location is the plastid. The protein localises to the chloroplast thylakoid membrane. Functionally, rod-core linker protein required for attachment of phycocyanin to allophycocyanin in cores of phycobilisomes. Linker polypeptides determine the state of aggregation and the location of the disk-shaped phycobiliprotein units within the phycobilisome and modulate their spectroscopic properties in order to mediate a directed and optimal energy transfer. This chain is Phycobilisome rod-core linker polypeptide cpcG (cpcG), found in Cyanidium caldarium (Red alga).